The primary structure comprises 998 residues: Methyl sulfide methyltransferase-associated sensor (998 aa).

A PAS 1 domain is found at 40–77 (FGYSPKDFISGGLGYADIIYPADLEIAVSQFFSYVEKD). The region spanning 117–169 (FTQQYRLLNKSGDVLWVEAEIKVLEEEEGKAGLFQVTVFDISRWKHTEKAMPA) is the PAC 1 domain. A PAS 2 domain is found at 209-246 (LGYTPEDFTSGRIVYTDIIHPDDLDNVRAEVSKNTEEG). The PAC 2 domain maps to 250–302 (FSKEYRVLAKSGEVRYVDERTLIRRNEKGEITCYQGILLDITQRKEAEELILS). Positions 314–458 (ASLDEVLLLL…NAYLAGIAIE (145 aa)) constitute a GAF 1 domain. The 72-residue stretch at 469 to 540 (SENRFRTIFD…ENMQKIKAEG (72 aa)) folds into the PAS 3 domain. Residues 609-752 (ASLKEITDFA…LMQGMWQLIQ (144 aa)) enclose the GAF 2 domain. Residue cysteine 656 coordinates heme. The Histidine kinase domain occupies 783–998 (EFVEEMMFPE…GNLMHVKLPK (216 aa)).

Heme serves as cofactor. Autophosphorylates: autophosphorylation is dependent on the redox state of heme cofactor and is promoted upon reduction.

The protein resides in the cytoplasm. The enzyme catalyses ATP + protein L-histidine = ADP + protein N-phospho-L-histidine.. In terms of biological role, heme-binding sensor kinase component part of a two-component regulatory system involved in methyl sulfide metabolism. Does not act as a phytochrome-like photoreceptor. The polypeptide is Methyl sulfide methyltransferase-associated sensor (msmS) (Methanosarcina acetivorans (strain ATCC 35395 / DSM 2834 / JCM 12185 / C2A)).